The sequence spans 267 residues: 5'-nucleotidase SurE (267 aa).

Residues aspartate 9, aspartate 10, serine 40, and asparagine 97 each coordinate a divalent metal cation.

It belongs to the SurE nucleotidase family. Requires a divalent metal cation as cofactor.

The protein localises to the cytoplasm. It catalyses the reaction a ribonucleoside 5'-phosphate + H2O = a ribonucleoside + phosphate. In terms of biological role, nucleotidase that shows phosphatase activity on nucleoside 5'-monophosphates. The protein is 5'-nucleotidase SurE of Helicobacter pylori (strain J99 / ATCC 700824) (Campylobacter pylori J99).